The sequence spans 1850 residues: Voltage-dependent L-type calcium channel subunit alpha-1S (1850 aa).

Residues 1–23 are disordered; it reads MEPSSPQDEGLRKKQPKKPVPEI. Over 1 to 51 the chain is Cytoplasmic; it reads MEPSSPQDEGLRKKQPKKPVPEILPRPPRALFCLTLQNPLRKACISVVEWK. Residues 38-337 form an I repeat; it reads NPLRKACISV…LVLGVLSGEF (300 aa). A helical transmembrane segment spans residues 52 to 70; the sequence is PFETIILLTIFANCVALAV. At 71–85 the chain is on the extracellular side; that stretch reads YLPMPEDDNNTLNLG. Residues 86–106 form a helical membrane-spanning segment; it reads LEKLEYFFLIVFSIEAAMKII. The Cytoplasmic portion of the chain corresponds to 107–115; it reads AYGFLFHQD. The helical transmembrane segment at 116–136 threads the bilayer; sequence AYLRSGWNVLDFIIVFLGVFT. Residues 137–160 are Extracellular-facing; sequence AILEQVNIIQTNTAPMSSKGAGLD. A helical membrane pass occupies residues 161 to 179; it reads VKALRAFRVLRPLRLVSGV. The Cytoplasmic portion of the chain corresponds to 180-196; it reads PSLQVVLNSIFKAMLPL. Residues 197-218 traverse the membrane as a helical segment; that stretch reads FHIALLVLFMVIIYAIIGLELF. Topologically, residues 219-279 are extracellular; it reads KGKMHKTCYF…HGITHFDNFG (61 aa). Intrachain disulfides connect Cys-226/Cys-254 and Cys-245/Cys-261. Residues 280-301 constitute an intramembrane region (pore-forming); the sequence is FSMLTVYQCISMEGWTDVLYWV. The short motif at 290-293 is the Selectivity filter of repeat I element; the sequence is SMEG. Ca(2+) is bound at residue Glu-292. Over 302-309 the chain is Extracellular; it reads NDAIGNEW. A helical membrane pass occupies residues 310–330; the sequence is PWIYFVTLILLGSFFILNLVL. Residues 331 to 432 are Cytoplasmic-facing; the sequence is GVLSGEFTKE…WKCHDLVKSK (102 aa). The interval 357–374 is binding to the beta subunit; sequence QQLEEDLRGYMSWITQGE. 2 positions are modified to phosphoserine: Ser-393 and Ser-397. One copy of the II repeat lies at 418–664; that stretch reads NRVFRWKCHD…VFLAIAVDNL (247 aa). A helical membrane pass occupies residues 433–451; it reads VFYWLVILIVALNTLSIAS. The Extracellular segment spans residues 452-462; that stretch reads EHHNQPLWLTH. Residues 463-483 form a helical membrane-spanning segment; it reads LQDVANRVLLALFTIEMLMKM. Residues 484-494 are Cytoplasmic-facing; sequence YGLGLRQYFMS. A helical membrane pass occupies residues 495 to 514; sequence IFNRFDCFVVCSGILEILLV. Residues 515–523 are Extracellular-facing; the sequence is ESGAMTPLG. The helical transmembrane segment at 524–542 threads the bilayer; it reads ISVLRCIRLLRLFKITKYW. Residues 543–561 are Cytoplasmic-facing; sequence TSLSNLVASLLNSIRSIAS. The chain crosses the membrane as a helical span at residues 562–581; sequence LLLLLFLFMIIFALLGMQLF. At 582–601 the chain is on the extracellular side; that stretch reads GGRYDFEDTEVRRSNFDNFP. An intramembrane region (pore-forming) is located at residues 602 to 623; it reads QALISVFQVLTGEDWNSVMYNG. The Selectivity filter of repeat II signature appears at 612–615; it reads TGED. Residue Glu-614 coordinates Ca(2+). At 624-633 the chain is on the extracellular side; sequence IMAYGGPSYP. The helical transmembrane segment at 634-653 threads the bilayer; it reads GVLVCIYFIILFVCGNYILL. At 654–799 the chain is on the cytoplasmic side; that stretch reads NVFLAIAVDN…VLCHRIVNAT (146 aa). Disordered regions lie at residues 673 to 717 and 731 to 758; these read AQKA…IPTT and EVKDPYPSADFPGDDEEDEPEIPASPRP. At Ser-687 the chain carries Phosphoserine; by PKA. A compositionally biased stretch (basic and acidic residues) spans 690–711; that stretch reads LPDKSEEERSTMTKKLEQKPKG. Residues 742–751 show a composition bias toward acidic residues; it reads PGDDEEDEPE. One copy of the III repeat lies at 786 to 1068; sequence NKIRVLCHRI…IFVGFVIVTF (283 aa). The chain crosses the membrane as a helical span at residues 800–818; the sequence is WFTNFILLFILLSSAALAA. Residues 819–830 are Extracellular-facing; it reads EDPIRADSMRNQ. A helical transmembrane segment spans residues 831-850; it reads ILEYFDYVFTAVFTVEIVLK. At 851–866 the chain is on the cytoplasmic side; the sequence is MTTYGAFLHKGSFCRN. Residues 867-885 traverse the membrane as a helical segment; that stretch reads YFNILDLLVVAVSLISMGL. Residues 886–892 are Extracellular-facing; the sequence is ESSAISV. A helical transmembrane segment spans residues 893-911; that stretch reads VKILRVLRVLRPLRAINRA. The Cytoplasmic portion of the chain corresponds to 912–930; it reads KGLKHVVQCVFVAIRTIGN. Residues 931-950 traverse the membrane as a helical segment; it reads IVLVTTLLQFMFACIGVQLF. Residues 951–1000 lie on the Extracellular side of the membrane; the sequence is KGKFYSCNDLSKMTEEECRGYYYIYKDGDPTQIELRPRQWIHNDFHFDNV. Cys-957 and Cys-968 are oxidised to a cystine. Residues 988 to 1077 form a dihydropyridine binding region; that stretch reads RQWIHNDFHF…FQEQGETEYK (90 aa). An intramembrane region (pore-forming) is located at residues 1001 to 1021; sequence LSAMMSLFTVSTFEGWPQLLY. The Selectivity filter of repeat III signature appears at 1012 to 1015; sequence TFEG. Glu-1014 lines the Ca(2+) pocket. The Extracellular portion of the chain corresponds to 1022 to 1038; the sequence is KAIDSNEEDTGPVYNNR. A helical transmembrane segment spans residues 1039–1060; sequence VEMAIFFIIYIILIAFFMMNIF. Over 1061 to 1118 the chain is Cytoplasmic; that stretch reads VGFVIVTFQEQGETEYKNCELDKNQRQCVQYALKARPLRCYIPKNPYQYQVWYVVTSS. The stretch at 1105–1384 is one IV repeat; it reads NPYQYQVWYV…LFVAVIMDNF (280 aa). The chain crosses the membrane as a helical span at residues 1119 to 1140; sequence YFEYLMFALIMLNTICLGMQHY. An N-linked (GlcNAc...) asparagine glycan is attached at Asn-1141. Topologically, residues 1141–1148 are extracellular; it reads NQSEQMNH. Residues 1149–1170 traverse the membrane as a helical segment; that stretch reads ISDILNVAFTIIFTLEMILKLI. The Cytoplasmic segment spans residues 1171 to 1180; it reads AFKPRGYFGD. Residues 1181–1200 form a helical membrane-spanning segment; sequence PWNVFDFLIVIGSIIDVILS. The Extracellular segment spans residues 1201 to 1231; the sequence is EIDTLLASSGGLYCLGGGCGNVDPDESARIS. A helical membrane pass occupies residues 1232–1250; it reads SAFFRLFRVMRLIKLLSRA. Residues 1251-1268 are Cytoplasmic-facing; it reads EGVRTLLWTFIKSFQALP. The chain crosses the membrane as a helical span at residues 1269 to 1289; that stretch reads YVALLIVMLFFIYAVIGMQMF. At 1290–1311 the chain is on the extracellular side; sequence GKIAMVDGTQINRNNNFQTFPQ. An intramembrane region (pore-forming) is located at residues 1312-1330; that stretch reads AVLLLFRCATGEAWQEILL. The short motif at 1321 to 1324 is the Selectivity filter of repeat IV element; that stretch reads TGEA. Residues 1331 to 1356 lie on the Extracellular side of the membrane; sequence ACSYGKRCDPESDYAPGEEYACGTNF. Residues 1337 to 1403 are dihydropyridine binding; it reads RCDPESDYAP…LGPHHLDEFK (67 aa). Cys-1338 and Cys-1352 are disulfide-bonded. The tract at residues 1349-1391 is phenylalkylamine binding; sequence EYACGTNFAYYYFISFYMLCAFLIINLFVAVIMDNFDYLTRDW. Residues 1357 to 1381 traverse the membrane as a helical segment; sequence AYYYFISFYMLCAFLIINLFVAVIM. Topologically, residues 1382–1850 are cytoplasmic; that stretch reads DNFDYLTRDW…PKGGAMPREP (469 aa). The interval 1522 to 1542 is interaction with calmodulin; it reads KFYATFLIQEHFRKFMKRQEE. Position 1575 is a phosphoserine; by PKA and CAMK2 (Ser-1575). Phosphothreonine is present on Thr-1579. At Ser-1617 the chain carries Phosphoserine; by PKA. Residues 1697 to 1779 are disordered; the sequence is PVTREGPFSQ…FEERVPRNSA (83 aa). Residues 1706 to 1716 are compositionally biased toward polar residues; that stretch reads QPCSVSGVNSR. Basic and acidic residues-rich tracts occupy residues 1717-1726 and 1745-1756; these read SHVDKLERQM and QEKHPVHEEGKG.

Belongs to the calcium channel alpha-1 subunit (TC 1.A.1.11) family. CACNA1S subfamily. Component of a calcium channel complex consisting of a pore-forming alpha subunit (CACNA1S) and the ancillary subunits CACNB1 or CACNB2, CACNG1 and CACNA2D1. The channel complex contains alpha, beta, gamma and delta subunits in a 1:1:1:1 ratio, i.e. it contains either CACNB1 or CACNB2. CACNA1S channel activity is modulated by the auxiliary subunits (CACNB1 or CACNB2, CACNG1 and CACNA2D1). Interacts with DYSF and JSRP1. Interacts with RYR1. Interacts with STAC, STAC2 and STAC3 (via their SH3 domains). Interacts with CALM. In terms of processing, the alpha-1S subunit is found in two isoforms in the skeletal muscle: a minor form of 212 kDa containing the complete amino acid sequence, and a major form of 190 kDa derived from the full-length form by post-translational proteolysis close to Phe-1690. Phosphorylated. Phosphorylation by PKA activates the calcium channel. Both the minor and major forms are phosphorylated in vitro by PKA. Phosphorylation at Ser-1575 is involved in beta-adrenergic-mediated regulation of the channel. Skeletal muscle specific.

It is found in the cell membrane. The protein localises to the sarcolemma. The protein resides in the T-tubule. The enzyme catalyses Ca(2+)(in) = Ca(2+)(out). With respect to regulation, channel activity is blocked by dihydropyridines (DHP), phenylalkylamines, and by benzothiazepines. Functionally, pore-forming, alpha-1S subunit of the voltage-gated calcium channel that gives rise to L-type calcium currents in skeletal muscle. Calcium channels containing the alpha-1S subunit play an important role in excitation-contraction coupling in skeletal muscle via their interaction with RYR1, which triggers Ca(2+) release from the sarcplasmic reticulum and ultimately results in muscle contraction. Long-lasting (L-type) calcium channels belong to the 'high-voltage activated' (HVA) group. This chain is Voltage-dependent L-type calcium channel subunit alpha-1S (Cacna1s), found in Rattus norvegicus (Rat).